Reading from the N-terminus, the 62-residue chain is Alpha-lytic protease L1 (62 aa).

Ser48 (charge relay system) is an active-site residue.

Belongs to the peptidase S1 family. In terms of assembly, monomer.

The protein resides in the secreted. The enzyme catalyses Preferential cleavage: Ala-|-Xaa, Val-|-Xaa in bacterial cell walls, elastin and other proteins.. Inhibited by phenylmethanesulfonyl fluoride (PMSF) and p-chloromercuribenzoate (PCMB). Functionally, has bacteriolytic activity. The sequence is that of Alpha-lytic protease L1 from Lysobacter sp. (strain XL1).